A 515-amino-acid polypeptide reads, in one-letter code: SWI/SNF-related matrix-associated actin-dependent regulator of chromatin subfamily D member 1 (515 aa).

The tract at residues 1-128 is disordered; the sequence is MAARAGFQSV…RNHNAKKKKM (128 aa). The span at 14–23 shows a compositional bias: gly residues; the sequence is GGAGASGGAG. An interaction with ESR1, NR1H4, NR3C1, PGR and SMARCA4 region spans residues 43 to 167; it reads APGQGLYRSP…DQTIMRKRLD (125 aa). Residues R68 and R88 each carry the asymmetric dimethylarginine modification. A Glycyl lysine isopeptide (Lys-Gly) (interchain with G-Cter in SUMO2) cross-link involves residue K101. The segment covering 104–117 has biased composition (low complexity); sequence APQQIQQVQQQAVQ. The segment at 168-474 is interaction with SMARCC1 and SMARCC2; sequence IQEALKRPIK…TMTDVVGNPE (307 aa). The tract at residues 180 to 515 is necessary for GR/NR3C1-mediated remodeling and transcription from chromatin; required for GR/NR3C1 interaction with the BRG1/SMARCA4 complex in vivo; sequence RKLRIFISNT…LEQALGIRNT (336 aa). T203 is modified (phosphothreonine). At K223 the chain carries N6-acetyllysine. The 78-residue stretch at 290-367 folds into the SWIB/MDM2 domain; the sequence is YQPPQFKLDP…PQRLHALLMP (78 aa). Residues 412 to 440 adopt a coiled-coil conformation; it reads ASQQEIATLDNKIHETIETINQLKTQREF.

Belongs to the SMARCD family. Component of the multiprotein chromatin-remodeling complexes SWI/SNF: SWI/SNF-A (BAF), SWI/SNF-B (PBAF) and related complexes. The canonical complex contains a catalytic subunit (either SMARCA4/BRG1/BAF190A or SMARCA2/BRM/BAF190B), and at least SMARCE1, ACTL6A/BAF53, SMARCC1/BAF155, SMARCC2/BAF170, and SMARCB1/SNF5/BAF47. Other subunits specific to each of the complexes may also be present permitting several possible combinations developmentally and tissue specific. Component of the BAF complex, which includes at least actin (ACTB), ARID1A/BAF250A, ARID1B/BAF250B, SMARCA2/BRM, SMARCA4/BRG1/BAF190A, ACTL6A/BAF53, ACTL6B/BAF53B, SMARCE1/BAF57, SMARCC1/BAF155, SMARCC2/BAF170, SMARCB1/SNF5/INI1, and one or more SMARCD1/BAF60A, SMARCD2/BAF60B, or SMARCD3/BAF60C. In muscle cells, the BAF complex also contains DPF3. Component of neural progenitors-specific chromatin remodeling complex (npBAF complex) composed of at least, ARID1A/BAF250A or ARID1B/BAF250B, SMARCD1/BAF60A, SMARCD3/BAF60C, SMARCA2/BRM/BAF190B, SMARCA4/BRG1/BAF190A, SMARCB1/BAF47, SMARCC1/BAF155, SMARCE1/BAF57, SMARCC2/BAF170, PHF10/BAF45A, ACTL6A/BAF53A and actin. Component of neuron-specific chromatin remodeling complex (nBAF complex) composed of at least, ARID1A/BAF250A or ARID1B/BAF250B, SMARCD1/BAF60A, SMARCD3/BAF60C, SMARCA2/BRM/BAF190B, SMARCA4/BRG1/BAF190A, SMARCB1/BAF47, SMARCC1/BAF155, SMARCE1/BAF57, SMARCC2/BAF170, DPF1/BAF45B, DPF3/BAF45C, ACTL6B/BAF53B and actin. Component of the SWI/SNF-B (PBAF) chromatin remodeling complex, at least composed of SMARCA4/BRG1, SMARCB1/BAF47/SNF5, ACTL6A/BAF53A or ACTL6B/BAF53B, SMARCE1/BAF57, SMARCD1/BAF60A, SMARCD2/BAF60B, perhaps SMARCD3/BAF60C, SMARCC1/BAF155, SMARCC2/BAF170, PBRM1/BAF180, ARID2/BAF200 and actin (ACTB). Component of SWI/SNF (GBAF) subcomplex, which includes at least BICRA or BICRAL (mutually exclusive), BRD9, SS18, SMARCA2/BRM, SMARCA4/BRG1/BAF190A, ACTL6A/BAF53, SMARCC1/BAF155, and SMARCD1/BAF60A. Specifically interacts with the VDR heterodimer complex. Interacts with ESR1, NR3C1, NR1H4, PGR, SMARCA4, SMARCC1 and SMARCC2. Interacts with DPF2. Interacts with DPF3a (isoform 2 of DPF3/BAF45C) and with HDGFL2 in a DPF3a-dependent manner. Interacts with FOS, FOSB isoform 1 and 2, FOSL1 and FOSL2. Interacts with AKIRIN2. Ubiquitous.

It is found in the nucleus. Its function is as follows. Involved in transcriptional activation and repression of select genes by chromatin remodeling (alteration of DNA-nucleosome topology). Component of SWI/SNF chromatin remodeling complexes that carry out key enzymatic activities, changing chromatin structure by altering DNA-histone contacts within a nucleosome in an ATP-dependent manner. Belongs to the neural progenitors-specific chromatin remodeling complex (npBAF complex) and the neuron-specific chromatin remodeling complex (nBAF complex). During neural development a switch from a stem/progenitor to a postmitotic chromatin remodeling mechanism occurs as neurons exit the cell cycle and become committed to their adult state. The transition from proliferating neural stem/progenitor cells to postmitotic neurons requires a switch in subunit composition of the npBAF and nBAF complexes. As neural progenitors exit mitosis and differentiate into neurons, npBAF complexes which contain ACTL6A/BAF53A and PHF10/BAF45A, are exchanged for homologous alternative ACTL6B/BAF53B and DPF1/BAF45B or DPF3/BAF45C subunits in neuron-specific complexes (nBAF). The npBAF complex is essential for the self-renewal/proliferative capacity of the multipotent neural stem cells. The nBAF complex along with CREST plays a role regulating the activity of genes essential for dendrite growth. Has a strong influence on vitamin D-mediated transcriptional activity from an enhancer vitamin D receptor element (VDRE). May be a link between mammalian SWI-SNF-like chromatin remodeling complexes and the vitamin D receptor (VDR) heterodimer. Mediates critical interactions between nuclear receptors and the BRG1/SMARCA4 chromatin-remodeling complex for transactivation. The sequence is that of SWI/SNF-related matrix-associated actin-dependent regulator of chromatin subfamily D member 1 (Smarcd1) from Mus musculus (Mouse).